Reading from the N-terminus, the 350-residue chain is Putative aminopeptidase MJ0555 (350 aa).

2 residues coordinate a divalent metal cation: H62 and D175. E207 (proton acceptor) is an active-site residue. Residues E208, D230, and H321 each contribute to the a divalent metal cation site.

The protein belongs to the peptidase M42 family. Requires a divalent metal cation as cofactor.

This Methanocaldococcus jannaschii (strain ATCC 43067 / DSM 2661 / JAL-1 / JCM 10045 / NBRC 100440) (Methanococcus jannaschii) protein is Putative aminopeptidase MJ0555.